The primary structure comprises 3333 residues: Laminin subunit alpha-3 (3333 aa).

A signal peptide spans 1-35; the sequence is MAAAARPRGRALGPVLPPTPLLLLVLRVLPACGAT. The Laminin N-terminal domain occupies 43–298; sequence AGLSLHPTYF…SIKDISIGGQ (256 aa). Asn-142 and Asn-242 each carry an N-linked (GlcNAc...) asparagine glycan. The segment at 298 to 728 is domain V; it reads QCVCNGHAEV…NNYYFPDLHH (431 aa). 29 disulfide bridges follow: Cys-299-Cys-308, Cys-301-Cys-319, Cys-321-Cys-330, Cys-333-Cys-353, Cys-356-Cys-365, Cys-358-Cys-390, Cys-393-Cys-402, Cys-405-Cys-423, Cys-426-Cys-436, Cys-428-Cys-443, Cys-445-Cys-454, Cys-457-Cys-467, Cys-491-Cys-503, Cys-493-Cys-509, Cys-511-Cys-520, Cys-523-Cys-533, Cys-536-Cys-548, Cys-538-Cys-555, Cys-557-Cys-566, Cys-569-Cys-586, Cys-601-Cys-610, Cys-613-Cys-628, Cys-631-Cys-645, Cys-633-Cys-652, Cys-654-Cys-663, Cys-666-Cys-681, Cys-684-Cys-696, Cys-686-Cys-703, and Cys-705-Cys-714. 8 Laminin EGF-like domains span residues 299 to 355, 356 to 425, 426 to 469, 491 to 535, 536 to 588, 590 to 630, 631 to 683, and 684 to 728; these read CVCN…ECEA, CNCH…GCIP, CSCD…FCLR, CDCN…ICQA, CWCS…ACDP, GTIN…GCSE, CKCH…GCQG, and CQCD…DLHH. The tract at residues 796-1265 is domain IV 1 (domain IV B); the sequence is TEAVSGHITI…VAFYHKGALP (470 aa). Cystine bridges form between Cys-1266/Cys-1278, Cys-1268/Cys-1285, Cys-1287/Cys-1296, Cys-1299/Cys-1309, Cys-1312/Cys-1319, Cys-1314/Cys-1326, Cys-1328/Cys-1337, Cys-1340/Cys-1353, Cys-1356/Cys-1371, Cys-1358/Cys-1378, Cys-1380/Cys-1389, Cys-1392/Cys-1402, Cys-1405/Cys-1417, Cys-1407/Cys-1424, Cys-1426/Cys-1435, and Cys-1438/Cys-1453. 4 consecutive Laminin EGF-like domains span residues 1266–1311, 1312–1355, 1356–1404, and 1405–1455; these read CECH…RCKP, CSCG…GCEG, CNCS…ECVP, and CNCN…GCTS. Residues 1266–1465 form a domain III B region; sequence CECHPTGATG…CFCFGVNNQC (200 aa). The region spanning 1476 to 1653 is the Laminin IV type A domain; sequence VDMLGWHLET…SGRIALAVEI (178 aa). Positions 1654 to 1821 are domain III A; it reads CACPPAYAGD…DSSPAEECDD (168 aa). 8 disulfides stabilise this stretch: Cys-1687–Cys-1696, Cys-1689–Cys-1703, Cys-1706–Cys-1715, Cys-1718–Cys-1731, Cys-1734–Cys-1746, Cys-1736–Cys-1755, Cys-1757–Cys-1766, and Cys-1769–Cys-1784. 2 Laminin EGF-like domains span residues 1687-1733 and 1734-1786; these read CNCN…SCRA and CPCP…SCQP. A Laminin EGF-like 15; truncated domain is found at 1787 to 1821; sequence CSCNSNGQLGSCHPLTGDCINQEPKDSSPAEECDD. Positions 1822-2389 are domain II and I; sequence CDSCVMTLLN…ARDAASKVAV (568 aa). 2 coiled-coil regions span residues 1852–1941 and 1987–2169; these read ASAG…KNVI and KHLR…DELV. A Cell attachment site motif is present at residues 2278–2280; the sequence is RGD. The stretch at 2322 to 2388 forms a coiled coil; sequence RTQNEDFKKA…QARDAASKVA (67 aa). Asn-2365, Asn-2502, and Asn-2584 each carry an N-linked (GlcNAc...) asparagine glycan. 5 Laminin G-like domains span residues 2390 to 2591, 2598 to 2760, 2767 to 2927, 2986 to 3150, and 3157 to 3330; these read PMRF…VEPC, SDKN…TKKC, VRSA…LGGC, ALQF…VSSC, and KGIY…LNGC. Disulfide bonds link Cys-2561–Cys-2591, Cys-2737–Cys-2760, Cys-2895–Cys-2927, Cys-3127–Cys-3150, and Cys-3302–Cys-3330.

Laminin is a complex glycoprotein, consisting of three different polypeptide chains (alpha, beta, gamma), which are bound to each other by disulfide bonds into a cross-shaped molecule comprising one long and three short arms with globules at each end. Alpha-3 is a subunit of laminin-5 (laminin-332 or epiligrin/kalinin/nicein), laminin-6 (laminin-311 or K-laminin) and laminin-7 (laminin-321 or KS-laminin). In terms of tissue distribution, skin; respiratory, urinary, and digestive epithelia and in other specialized tissues with prominent secretory or protective functions. Epithelial basement membrane, and epithelial cell tongue that migrates into a wound bed. A differential and focal expression of the subunit alpha-3 is observed in the CNS.

The protein localises to the secreted. It localises to the extracellular space. It is found in the extracellular matrix. Its subcellular location is the basement membrane. Functionally, binding to cells via a high affinity receptor, laminin is thought to mediate the attachment, migration and organization of cells into tissues during embryonic development by interacting with other extracellular matrix components. Its function is as follows. Laminin-5 is thought to be involved in (1) cell adhesion via integrin alpha-3/beta-1 in focal adhesion and integrin alpha-6/beta-4 in hemidesmosomes, (2) signal transduction via tyrosine phosphorylation of pp125-FAK and p80, (3) differentiation of keratinocytes. The protein is Laminin subunit alpha-3 (LAMA3) of Homo sapiens (Human).